Here is an 823-residue protein sequence, read N- to C-terminus: DNA ligase (823 aa).

NAD(+)-binding positions include 31 to 35 and 73 to 74; these read DDAFD and SQ. The active-site N6-AMP-lysine intermediate is Lys-100. Positions 121, 163, 275, and 296 each coordinate NAD(+). Positions 387, 390, 403, and 408 each coordinate Zn(2+). 3 BRCT domains span residues 562–655, 654–742, and 741–823; these read QAES…TGET, ETVH…DAHV, and HVHA…TPGT.

It belongs to the NAD-dependent DNA ligase family. LigA subfamily. Mg(2+) is required as a cofactor. Mn(2+) serves as cofactor.

It carries out the reaction NAD(+) + (deoxyribonucleotide)n-3'-hydroxyl + 5'-phospho-(deoxyribonucleotide)m = (deoxyribonucleotide)n+m + AMP + beta-nicotinamide D-nucleotide.. Its function is as follows. DNA ligase that catalyzes the formation of phosphodiester linkages between 5'-phosphoryl and 3'-hydroxyl groups in double-stranded DNA using NAD as a coenzyme and as the energy source for the reaction. It is essential for DNA replication and repair of damaged DNA. This is DNA ligase from Treponema pallidum (strain Nichols).